The primary structure comprises 215 residues: 3-demethoxyubiquinol 3-hydroxylase (215 aa).

Fe cation contacts are provided by Glu-64, Glu-94, His-97, Glu-146, Glu-178, and His-181.

It belongs to the COQ7 family. The cofactor is Fe cation.

It is found in the cell membrane. It catalyses the reaction a 5-methoxy-2-methyl-3-(all-trans-polyprenyl)benzene-1,4-diol + AH2 + O2 = a 3-demethylubiquinol + A + H2O. The protein operates within cofactor biosynthesis; ubiquinone biosynthesis. Catalyzes the hydroxylation of 2-nonaprenyl-3-methyl-6-methoxy-1,4-benzoquinol during ubiquinone biosynthesis. In Pseudomonas fluorescens (strain SBW25), this protein is 3-demethoxyubiquinol 3-hydroxylase.